The primary structure comprises 36 residues: Photosystem I reaction center subunit VIII (36 aa).

Residues 9–29 form a helical membrane-spanning segment; the sequence is ILTPVVTLVFPGLMFALFFVL.

Belongs to the PsaI family.

It is found in the plastid. It localises to the chloroplast thylakoid membrane. In terms of biological role, may help in the organization of the PsaL subunit. This is Photosystem I reaction center subunit VIII from Emiliania huxleyi (Coccolithophore).